The chain runs to 203 residues: Holliday junction branch migration complex subunit RuvA (203 aa).

Positions 1 to 65 (MIAYIHGKLL…EDAFDLYGFP (65 aa)) are domain I. The tract at residues 66–144 (CFDDREVFRT…TLKSATVRSG (79 aa)) is domain II. A flexible linker region spans residues 145–155 (ACPVEGDRSEF). Residues 155 to 203 (FLDALSGLRNLGYGDDEVRDFLKDIFDEEPDLDAGGAIRVALKKISQNK) are domain III.

This sequence belongs to the RuvA family. Homotetramer. Forms an RuvA(8)-RuvB(12)-Holliday junction (HJ) complex. HJ DNA is sandwiched between 2 RuvA tetramers; dsDNA enters through RuvA and exits via RuvB. An RuvB hexamer assembles on each DNA strand where it exits the tetramer. Each RuvB hexamer is contacted by two RuvA subunits (via domain III) on 2 adjacent RuvB subunits; this complex drives branch migration. In the full resolvosome a probable DNA-RuvA(4)-RuvB(12)-RuvC(2) complex forms which resolves the HJ.

It is found in the cytoplasm. Its function is as follows. The RuvA-RuvB-RuvC complex processes Holliday junction (HJ) DNA during genetic recombination and DNA repair, while the RuvA-RuvB complex plays an important role in the rescue of blocked DNA replication forks via replication fork reversal (RFR). RuvA specifically binds to HJ cruciform DNA, conferring on it an open structure. The RuvB hexamer acts as an ATP-dependent pump, pulling dsDNA into and through the RuvAB complex. HJ branch migration allows RuvC to scan DNA until it finds its consensus sequence, where it cleaves and resolves the cruciform DNA. The protein is Holliday junction branch migration complex subunit RuvA of Maridesulfovibrio salexigens (strain ATCC 14822 / DSM 2638 / NCIMB 8403 / VKM B-1763) (Desulfovibrio salexigens).